The following is a 96-amino-acid chain: Large ribosomal subunit protein eL14 (96 aa).

Belongs to the eukaryotic ribosomal protein eL14 family.

This chain is Large ribosomal subunit protein eL14, found in Staphylothermus marinus (strain ATCC 43588 / DSM 3639 / JCM 9404 / F1).